Consider the following 184-residue polypeptide: Uroplakin-2 (184 aa).

The N-terminal stretch at 1–25 is a signal peptide; that stretch reads MASTLPVQTLPLILILLAVLAPGTA. A propeptide spanning residues 26-84 is cleaved from the precursor; that stretch reads DFNISSLSGLLSPALTESLLIALPPCHLTGGNATLMVRRANDSKVVKSDFVVPPCRGRR. N-linked (GlcNAc...) asparagine glycosylation is found at Asn-28, Asn-57, and Asn-66. Residues 85–155 lie on the Lumenal side of the membrane; the sequence is ELVSVVDSGS…IGLGMARTGG (71 aa). A helical membrane pass occupies residues 156–180; that stretch reads MVVITVLLSVAMFLLVVGLIVALHW. At 181 to 184 the chain is on the cytoplasmic side; the sequence is DARK.

It belongs to the uroplakin-2 family. In terms of assembly, interacts with uroplakin-1a (UPK1A).

The protein resides in the cell membrane. Its function is as follows. Component of the asymmetric unit membrane (AUM); a highly specialized biomembrane elaborated by terminally differentiated urothelial cells. May play an important role in regulating the assembly of the AUM. The sequence is that of Uroplakin-2 (Upk2) from Mus musculus (Mouse).